We begin with the raw amino-acid sequence, 442 residues long: Testican-1 (442 aa).

The signal sequence occupies residues Met1–Ser21. Intrachain disulfides connect Cys89–Cys100, Cys94–Cys110, Cys139–Cys169, Cys142–Cys162, Cys151–Cys183, Cys316–Cys340, Cys351–Cys358, and Cys360–Cys379. In terms of domain architecture, Kazal-like spans Pro133–Cys185. In terms of domain architecture, Thyroglobulin type-1 spans Gly313–Cys379. Disordered stretches follow at residues Gly375–Val395 and Thr420–Trp442. O-linked (Xyl...) (glycosaminoglycan) serine glycans are attached at residues Ser386 and Ser391. Over residues Glu425 to Trp442 the composition is skewed to acidic residues.

In terms of processing, contains chondroitin sulfate and heparan sulfate O-linked oligosaccharides. As to expression, predominantly expressed in the postsynaptic area of pyramidal neurons.

It is found in the secreted. The protein resides in the extracellular space. It localises to the extracellular matrix. Its function is as follows. May play a role in cell-cell and cell-matrix interactions. May contribute to various neuronal mechanisms in the central nervous system. The chain is Testican-1 (Spock1) from Mus musculus (Mouse).